We begin with the raw amino-acid sequence, 75 residues long: Small ribosomal subunit protein bS18 (75 aa).

Belongs to the bacterial ribosomal protein bS18 family. Part of the 30S ribosomal subunit. Forms a tight heterodimer with protein bS6.

In terms of biological role, binds as a heterodimer with protein bS6 to the central domain of the 16S rRNA, where it helps stabilize the platform of the 30S subunit. The sequence is that of Small ribosomal subunit protein bS18 from Teredinibacter turnerae (strain ATCC 39867 / T7901).